Here is a 287-residue protein sequence, read N- to C-terminus: MDSVPRDYSKRVYQGVRVKHTVKDLLAEKRSRQTSNTRLNGSVSSSQPPFIQMPGSPVMSGYYGVRRSFLSDSDFHSSKQFSNDLYTSGMSKPFACESTAGQSHTGLLESYLAEPYGDYRPPALTPTPSSLFSTSTLPPLLPPPFPSDPTHFVFRDSWEQTVPDGLSQPDPMPADALQSLPPSTSCLSQLESGSSTQHRNMGWGASLAGAQSYSLHALEDLHHTPGYPTSPPYPFTSFMTVSNDLPPKVGPLSPEEGSDVSSLHDPSPWTKEDGSMAWGSYECRRAY.

Residues 10–32 (KRVYQGVRVKHTVKDLLAEKRSR) form the OCA domain. Disordered regions lie at residues 24–51 (DLLA…PPFI), 161–199 (TVPD…TQHR), and 247–279 (PKVG…MAWG). Composition is skewed to polar residues over residues 33-49 (QTSN…SQPP) and 180-199 (LPPS…TQHR).

Belongs to the POU2AF family. In terms of assembly, interacts with POU2F3 (via the POU domain) in a DNA-dependent manner; this interaction recruits POU2AF2 to chromatin and increases POU2F3 transactivation activity. As to expression, expressed in tuft cells of the small intestine, trachea, thymus, and colon.

It is found in the cytoplasm. The protein localises to the cytosol. The protein resides in the nucleus. Functionally, transcriptional coactivator of POU2F3. This complex drives the development of tuft cells, a rare chemosensory cells that coordinate immune and neural functions within mucosal epithelial tissues. This Mus musculus (Mouse) protein is POU domain class 2-associating factor 2.